A 528-amino-acid polypeptide reads, in one-letter code: Purine-cytosine permease FCY21 (528 aa).

Residues 1–90 (MPQTHEMSLN…DDSILNAASM (90 aa)) lie on the Cytoplasmic side of the membrane. Phosphoserine is present on serine 43. Threonine 46 is subject to Phosphothreonine. The chain crosses the membrane as a helical span at residues 91–111 (WFSANMVLPAYAIGALGPMVF). The Extracellular segment spans residues 112-118 (DLNFGQS). Residues 119 to 139 (VFVIIFFNLLGLVSVAFFSVF) traverse the membrane as a helical segment. The Cytoplasmic portion of the chain corresponds to 140 to 161 (GAELGLRQMILSRYLVGNIAAR). Residues 162 to 182 (IFSFINFIACIGWGIVNTVAS) traverse the membrane as a helical segment. At 183–198 (SQVLNMVNPGHQCPLW) the chain is on the extracellular side. The helical transmembrane segment at 199–219 (AGCIVIIGATVIVTFFGYGVI) threads the bilayer. The Cytoplasmic segment spans residues 220–221 (HA). Residues 222–242 (YEKWAWVPNFAVFLVIIARLA) form a helical membrane-spanning segment. Residues 243–260 (RSKKFVLGEWTSGPTTAG) lie on the Extracellular side of the membrane. A helical membrane pass occupies residues 261–281 (NVLSFGSTVYGFAAGWTTYAA). The Cytoplasmic portion of the chain corresponds to 282-295 (DYTVYMPRKTNKYK). The helical transmembrane segment at 296–316 (IFFSLVVGLATPLYFTMILGA) threads the bilayer. Topologically, residues 317-340 (AVAMAAIGDPAWKTYYDENSIGGL) are extracellular. A helical membrane pass occupies residues 341–361 (TFAVLVPNSVHGFGQFCCVLL). Residues 362–393 (SLSTIANNVPNMYTIALSVQATWEPLAKVPRV) are Cytoplasmic-facing. The helical transmembrane segment at 394-414 (IWTLLGNAAALGIAIPACYYF) threads the bilayer. The Extracellular segment spans residues 415–416 (ST). A helical membrane pass occupies residues 417-437 (FMNYFMDSIGYYLAIYIAIAC). The Cytoplasmic segment spans residues 438-460 (SEHFIYRRSFSAYNVDDWDSWER). A helical transmembrane segment spans residues 461 to 481 (LPIGIAGTAALIVGAFGVALG). The Extracellular portion of the chain corresponds to 482 to 493 (MCQTYWVGEISR). Residues 494 to 514 (LIGDYGGDIGFELGLSWAFIV) form a helical membrane-spanning segment. The Cytoplasmic segment spans residues 515-528 (YNIARPFELKYFGR).

Belongs to the purine-cytosine permease (2.A.39) family.

It is found in the membrane. Its function is as follows. Probable purine-cytosine permease. The chain is Purine-cytosine permease FCY21 (FCY21) from Saccharomyces cerevisiae (strain ATCC 204508 / S288c) (Baker's yeast).